Consider the following 559-residue polypeptide: Small ribosomal subunit protein uS3m (559 aa).

Residues 113-134 (EGTEEERNEVRGRGAGKRVESI) are disordered. A compositionally biased stretch (basic and acidic residues) spans 120 to 134 (NEVRGRGAGKRVESI).

It belongs to the universal ribosomal protein uS3 family.

It is found in the mitochondrion. This is Small ribosomal subunit protein uS3m (RPS3) from Zea mays (Maize).